We begin with the raw amino-acid sequence, 286 residues long: Transcriptional regulator of yeast form adherence 4 (286 aa).

Low complexity-rich tracts occupy residues 1–29 (MSLPMSPVSPINTTTSTSTTTTPLSPPSS) and 37–65 (LSTSISNNSITSDSSLDSNTSTSSTTTTN). The tract at residues 1-71 (MSLPMSPVSP…TTTNYGTKTP (71 aa)) is disordered. 2 C2H2-type zinc fingers span residues 78–101 (FNCTLCQRAFTREEHLTRHTLSTH) and 107–130 (FTCGICSRPFSRRDLLLRHAKNLH). The segment at 146–260 (HCNKDNDSKS…ITNSSTSHIH (115 aa)) is disordered. 2 stretches are compositionally biased toward low complexity: residues 156–165 (GSDSNTNKTN) and 228–244 (SVPSTTTTSTTTVPTST). The segment covering 245-260 (NNDTASITNSSTSHIH) has biased composition (polar residues).

It localises to the nucleus. Transcription factor required for yeast cell adherence to silicone substrate. This Candida albicans (strain SC5314 / ATCC MYA-2876) (Yeast) protein is Transcriptional regulator of yeast form adherence 4 (TRY4).